Reading from the N-terminus, the 170-residue chain is ATP synthase subunit b (170 aa).

The helical transmembrane segment at 30-50 (FFFVLAIFLVVLAVIGTFVVP) threads the bilayer.

Belongs to the ATPase B chain family. F-type ATPases have 2 components, F(1) - the catalytic core - and F(0) - the membrane proton channel. F(1) has five subunits: alpha(3), beta(3), gamma(1), delta(1), epsilon(1). F(0) has three main subunits: a(1), b(2) and c(10-14). The alpha and beta chains form an alternating ring which encloses part of the gamma chain. F(1) is attached to F(0) by a central stalk formed by the gamma and epsilon chains, while a peripheral stalk is formed by the delta and b chains.

It localises to the cell membrane. Functionally, f(1)F(0) ATP synthase produces ATP from ADP in the presence of a proton or sodium gradient. F-type ATPases consist of two structural domains, F(1) containing the extramembraneous catalytic core and F(0) containing the membrane proton channel, linked together by a central stalk and a peripheral stalk. During catalysis, ATP synthesis in the catalytic domain of F(1) is coupled via a rotary mechanism of the central stalk subunits to proton translocation. Component of the F(0) channel, it forms part of the peripheral stalk, linking F(1) to F(0). In Mycobacterium marinum (strain ATCC BAA-535 / M), this protein is ATP synthase subunit b.